The sequence spans 492 residues: Probable malate:quinone oxidoreductase 1 (492 aa).

The protein belongs to the MQO family. FAD is required as a cofactor.

It catalyses the reaction (S)-malate + a quinone = a quinol + oxaloacetate. It functions in the pathway carbohydrate metabolism; tricarboxylic acid cycle; oxaloacetate from (S)-malate (quinone route): step 1/1. In Staphylococcus epidermidis (strain ATCC 12228 / FDA PCI 1200), this protein is Probable malate:quinone oxidoreductase 1.